A 397-amino-acid polypeptide reads, in one-letter code: Odorant receptor 22b (397 aa).

The Cytoplasmic segment spans residues 1–49 (MLSQFFPHIKEKPLSERVKSRDAFVYLDRVMWSFGWTVPENKRWDLHYK). Residues 50 to 70 (LWSTFVTLLIFILLPISVSVE) traverse the membrane as a helical segment. Over 71 to 85 (YIQRFKTFSAGEFLS) the chain is Extracellular. A helical membrane pass occupies residues 86–105 (SIQIGVNMYGSSFKSYLTMM). The Cytoplasmic segment spans residues 106 to 143 (GYKKRQEAKMSLDELDKRCVCDEERTIVHRHVALGNFC). Residues 144-164 (YIFYHIAYTSFLISNFLSFIM) form a helical membrane-spanning segment. Residues 165–194 (KRIHAWRMYFPYVDPEKQFYISSIAEVILR) lie on the Extracellular side of the membrane. Residues 195–215 (GWAVFMDLCTDVCPLISMVIA) form a helical membrane-spanning segment. The Cytoplasmic segment spans residues 216-268 (RCHITLLKQRLRNLRSEPGRTEDEYLKELADCVRDHRLILDYVDALRSVFSGT). A helical transmembrane segment spans residues 269 to 289 (IFVQFLLIGIVLGLSMINIMF). The Extracellular segment spans residues 290 to 295 (FSTLST). Residues 296–316 (GVAVVLFMSCVSMQTFPFCYL) form a helical membrane-spanning segment. Over 317 to 347 (CNMIMDDCQEMADSLFQSDWTSADRRYKSTL) the chain is Cytoplasmic. Residues 348 to 368 (VYFLHNLQQPIILTAGGVFPI) form a helical membrane-spanning segment. Topologically, residues 369–397 (SMQTNLNMVKLAFTVVTIVKQFNLAEKFQ) are extracellular.

The protein belongs to the insect chemoreceptor superfamily. Heteromeric odorant receptor channel (TC 1.A.69) family. Or2a subfamily. In terms of assembly, interacts with Orco, via conserved C-terminal cytoplasmic loops. Complexes exist early in the endomembrane system in olfactory sensory neurons (OSNs), coupling these complexes to the conserved ciliary trafficking pathway. Expressed with Orco in 20-22 sensory neurons on the medial-proximal edge of the antenna. This expression pattern matches the distribution of the large sensilla basiconica. Expression is first seen at 60 hours APF in a subset of cells restricted to a subregion of the developing antenna. Expression continues throughout antennal development. Expressed in the ab3A neuron which responds to ethyl butyrate.

The protein resides in the cell membrane. Odorant receptor which mediates acceptance or avoidance behavior, depending on its substrates. The odorant receptor repertoire encodes a large collection of odor stimuli that vary widely in identity, intensity, and duration. Involved in the behavioral responses to esters. Complexes with Orco to form odorant-sensing units, providing sensitive and prolonged odorant signaling and calcium permeability. They are necessary and sufficient to promote functional reconstitution of odor-evoked signaling in sensory neurons that normally respond only to carbon dioxide. This is Odorant receptor 22b (Or22b) from Drosophila melanogaster (Fruit fly).